The primary structure comprises 616 residues: Cleavage stimulation factor subunit 2 tau variant (616 aa).

An RRM domain is found at 16 to 94 (RSVFVGNIPY…RALRVDNAAS (79 aa)). 2 disordered regions span residues 203–241 (GKSQSVSVSGPGPGPGPGLCPGPNVLLNQQNPPAPQPQH) and 262–418 (IPAP…SRAM). Composition is skewed to low complexity over residues 223 to 233 (PGPNVLLNQQN) and 319 to 331 (VTPGGLPPRGLLG). At T320 the chain carries Phosphothreonine. The span at 368–381 (SGHDTRGPSSHEMR) shows a compositional bias: basic and acidic residues. The 1-1 repeat unit spans residues 418-422 (METRA). The tract at residues 418 to 462 (METRAMETEVLETRVMERRGMETCAMETRGMEARGMDARGLEMRG) is 9 X 5 AA tandem repeats of M-E-T-R-[AG]. One copy of the 1-2; approximate repeat lies at 423-427 (METEV). The 1-3; approximate repeat unit spans residues 428–432 (LETRV). The stretch at 433-437 (MERRG) is one 1-4; approximate repeat. Residues 438-442 (METCA) form a 1-5; approximate repeat. One copy of the 1-6 repeat lies at 443 to 447 (METRG). Residues 448 to 452 (MEARG) form a 1-7; approximate repeat. A 1-8; approximate repeat occupies 453 to 457 (MDARG). Residues 458–462 (LEMRG) form a 1-9; approximate repeat. 4 consecutive repeat copies span residues 505-509 (GAGMQ), 510-514 (GTGIQ), 515-519 (GTGMQ), and 520-524 (GAGIQ). A 9 X 5 AA tandem repeats of G-[AT]-G-[MI]-Q region spans residues 505 to 549 (GAGMQGTGIQGTGMQGAGIQGGGMQGAGIQGVSIQGGGIQGGGIQ). Residues 525 to 529 (GGGMQ) form a 2-5; approximate repeat. The 2-6 repeat unit spans residues 530 to 534 (GAGIQ). The stretch at 535–539 (GVSIQ) is one 2-7; approximate repeat. Residues 540–544 (GGGIQ) form a 2-8; approximate repeat. Positions 542-573 (GIQGGGIQGASKQGGSQPSSFSPGQSQVTPQD) are disordered. The stretch at 545-549 (GGGIQ) is one 2-9; approximate repeat. The span at 550-568 (GASKQGGSQPSSFSPGQSQ) shows a compositional bias: low complexity. S563 carries the phosphoserine modification.

It is found in the nucleus. Its function is as follows. May play a significant role in AAUAAA-independent mRNA polyadenylation in germ cells. Directly involved in the binding to pre-mRNAs. The sequence is that of Cleavage stimulation factor subunit 2 tau variant (CSTF2T) from Homo sapiens (Human).